A 634-amino-acid chain; its full sequence is 1-deoxy-D-xylulose-5-phosphate synthase (634 aa).

Thiamine diphosphate-binding positions include H79 and 120–122 (GHA). D151 serves as a coordination point for Mg(2+). Residues 152–153 (GS), N180, Y292, and E376 contribute to the thiamine diphosphate site. Mg(2+) is bound at residue N180.

Belongs to the transketolase family. DXPS subfamily. As to quaternary structure, homodimer. Mg(2+) serves as cofactor. It depends on thiamine diphosphate as a cofactor.

It catalyses the reaction D-glyceraldehyde 3-phosphate + pyruvate + H(+) = 1-deoxy-D-xylulose 5-phosphate + CO2. The protein operates within metabolic intermediate biosynthesis; 1-deoxy-D-xylulose 5-phosphate biosynthesis; 1-deoxy-D-xylulose 5-phosphate from D-glyceraldehyde 3-phosphate and pyruvate: step 1/1. In terms of biological role, catalyzes the acyloin condensation reaction between C atoms 2 and 3 of pyruvate and glyceraldehyde 3-phosphate to yield 1-deoxy-D-xylulose-5-phosphate (DXP). The sequence is that of 1-deoxy-D-xylulose-5-phosphate synthase from Porphyromonas gingivalis (strain ATCC BAA-308 / W83).